We begin with the raw amino-acid sequence, 921 residues long: cGMP-dependent 3',5'-cyclic phosphodiesterase (921 aa).

The residue at position 1 (M1) is an N-acetylmethionine. Disordered stretches follow at residues 1-21 (MRRQ…PPGS) and 177-198 (ESSV…DQKG). Residues 177–188 (ESSVAPEATQNP) show a composition bias toward polar residues. GAF domains are found at residues 220-357 (DASS…STVL) and 389-528 (DVSV…GISI). 5 residues coordinate 3',5'-cyclic GMP: S411, D426, I445, Y468, and T479. Positions 558–882 (SDDEYTKLLH…EHWTKVSHKF (325 aa)) constitute a PDEase domain. H636 (proton donor) is an active-site residue. Zn(2+) contacts are provided by H640, H676, D677, and D788. D677 is a Mg(2+) binding site.

Belongs to the cyclic nucleotide phosphodiesterase family. PDE2 subfamily. As to quaternary structure, homodimer. Zn(2+) is required as a cofactor. Requires Mg(2+) as cofactor.

It is found in the cell membrane. The protein resides in the cytoplasm. The protein localises to the mitochondrion. Its subcellular location is the mitochondrion inner membrane. It localises to the mitochondrion outer membrane. It catalyses the reaction a nucleoside 3',5'-cyclic phosphate + H2O = a nucleoside 5'-phosphate + H(+). The enzyme catalyses 3',5'-cyclic GMP + H2O = GMP + H(+). It carries out the reaction 3',5'-cyclic AMP + H2O = AMP + H(+). The 3',5'-cyclic-AMP phosphodiesterase activity is stimulated by 3',5'-cyclic GMP. In terms of biological role, cGMP-activated cyclic nucleotide phosphodiesterase with a dual-specificity for the second messengers cAMP and cGMP, which are key regulators of many important physiological processes. Has a higher efficiency with cGMP compared to cAMP. Plays a role in cell growth and migration. Its function is as follows. Regulates mitochondrial cAMP levels and respiration. Involved in the regulation of mitochondria morphology/dynamics and apoptotic cell death via local modulation of cAMP/PKA signaling in the mitochondrion, including the monitoring of local cAMP levels at the outer mitochondrial membrane and of PKA-dependent phosphorylation of DNM1L. The protein is cGMP-dependent 3',5'-cyclic phosphodiesterase of Bos taurus (Bovine).